The sequence spans 137 residues: Large ribosomal subunit protein uL16 (137 aa).

The protein belongs to the universal ribosomal protein uL16 family. In terms of assembly, part of the 50S ribosomal subunit.

Functionally, binds 23S rRNA and is also seen to make contacts with the A and possibly P site tRNAs. The sequence is that of Large ribosomal subunit protein uL16 from Ectopseudomonas mendocina (strain ymp) (Pseudomonas mendocina).